A 363-amino-acid polypeptide reads, in one-letter code: tRNA U34 carboxymethyltransferase (363 aa).

Residues K101, W134, K139, G159, 181–183 (DPS), 221–222 (LE), M237, Y241, and R356 contribute to the carboxy-S-adenosyl-L-methionine site.

The protein belongs to the class I-like SAM-binding methyltransferase superfamily. CmoB family. Homotetramer.

The catalysed reaction is carboxy-S-adenosyl-L-methionine + 5-hydroxyuridine(34) in tRNA = 5-carboxymethoxyuridine(34) in tRNA + S-adenosyl-L-homocysteine + H(+). Its function is as follows. Catalyzes carboxymethyl transfer from carboxy-S-adenosyl-L-methionine (Cx-SAM) to 5-hydroxyuridine (ho5U) to form 5-carboxymethoxyuridine (cmo5U) at position 34 in tRNAs. The chain is tRNA U34 carboxymethyltransferase from Psychrobacter cryohalolentis (strain ATCC BAA-1226 / DSM 17306 / VKM B-2378 / K5).